The following is a 219-amino-acid chain: UPF0126 membrane protein SCO5481 (219 aa).

The next 6 helical transmembrane spans lie at 10–30 (VQHTLDLVGIFVFAISGALLA), 34–54 (NFDVFGIAVLAEVTALGGGLF), 66–86 (AFTDLGYFLTPLLATLLVFFL), 93–113 (LQTGVNIFDAAGLGLFCVAGT), 120–140 (GLGLTASACLGLTTAVGGGVL), and 158–178 (LYAVPAIVGSAMVALCIRYEA).

It belongs to the UPF0126 family.

The protein localises to the cell membrane. In Streptomyces coelicolor (strain ATCC BAA-471 / A3(2) / M145), this protein is UPF0126 membrane protein SCO5481.